Consider the following 320-residue polypeptide: Alpha/beta hydrolase domain-containing protein 17C (320 aa).

A disordered region spans residues 50–75 (RAPAPAATPAPAPAAQPAPAEEGAGP). Residues 55 to 65 (AATPAPAPAAQ) are compositionally biased toward pro residues. Residues Ser202, Asp267, and His296 each act as charge relay system in the active site.

Belongs to the AB hydrolase superfamily. ABHD17 family. Palmitoylated on cysteine residues located in a cysteine cluster at the N-terminus which promotes membrane localization. Palmitoylation is required for post-synaptic localization and for depalmitoylating activity towards DLG4/PSD95.

It localises to the recycling endosome membrane. Its subcellular location is the cell projection. The protein localises to the dendritic spine. It is found in the postsynaptic density membrane. The catalysed reaction is S-hexadecanoyl-L-cysteinyl-[protein] + H2O = L-cysteinyl-[protein] + hexadecanoate + H(+). In terms of biological role, hydrolyzes fatty acids from S-acylated cysteine residues in proteins. Has depalmitoylating activity towards DLG4/PSD95. The polypeptide is Alpha/beta hydrolase domain-containing protein 17C (Mus musculus (Mouse)).